The chain runs to 379 residues: Beta-1,3-N-acetylglucosaminyltransferase lunatic fringe (379 aa).

The Cytoplasmic segment spans residues 1–8; sequence MLKRCGRR. A helical; Signal-anchor for type II membrane protein membrane pass occupies residues 9-29; that stretch reads LLLALAGALLACLLVLTADPP. Residues 30–379 lie on the Lumenal side of the membrane; the sequence is PPPLPAERGR…TPWCPRTAIF (350 aa). The interval 86-107 is disordered; that stretch reads RDAGPPPGAAPRPADGHPRPLA. Arg129 contacts substrate. Asn167 carries an N-linked (GlcNAc...) asparagine glycan. Disulfide bonds link Cys168–Cys179 and Cys197–Cys260. Asp201 contributes to the substrate binding site. Asp202 is a Mn(2+) binding site. Residue Asp290 is part of the active site. His314 lines the Mn(2+) pocket. A disulfide bond links Cys364 and Cys373.

It belongs to the glycosyltransferase 31 family. It depends on Mn(2+) as a cofactor. Co(2+) serves as cofactor. In terms of processing, a soluble form may be derived from the membrane form by proteolytic processing.

It localises to the golgi apparatus. The protein resides in the golgi apparatus membrane. It carries out the reaction 3-O-(alpha-L-fucosyl)-L-threonyl-[EGF-like domain protein] + UDP-N-acetyl-alpha-D-glucosamine = 3-O-(N-acetyl-beta-D-glucosaminyl-(1-&gt;3)-alpha-L-fucosyl)-L-threonyl-[EGF-like domain protein] + UDP + H(+). It catalyses the reaction 3-O-(alpha-L-fucosyl)-L-seryl-[EGF-like domain protein] + UDP-N-acetyl-alpha-D-glucosamine = 3-O-(N-acetyl-beta-D-glucosaminyl-(1-&gt;3)-alpha-L-fucosyl)-L-seryl-[EGF-like domain protein] + UDP + H(+). Glycosyltransferase that initiates the elongation of O-linked fucose residues attached to EGF-like repeats in the extracellular domain of Notch molecules. Modulates NOTCH1 activity by modifying O-fucose residues at specific EGF-like domains resulting in inhibition of NOTCH1 activation by JAG1 and enhancement of NOTCH1 activation by DLL1 via an increase in its binding to DLL1. Decreases the binding of JAG1 to NOTCH2 but not that of DLL1. Essential mediator of somite segmentation and patterning. The sequence is that of Beta-1,3-N-acetylglucosaminyltransferase lunatic fringe from Homo sapiens (Human).